A 248-amino-acid chain; its full sequence is Ubiquinone/menaquinone biosynthesis C-methyltransferase UbiE (248 aa).

S-adenosyl-L-methionine is bound by residues serine 68 and aspartate 92.

This sequence belongs to the class I-like SAM-binding methyltransferase superfamily. MenG/UbiE family.

The catalysed reaction is a 2-demethylmenaquinol + S-adenosyl-L-methionine = a menaquinol + S-adenosyl-L-homocysteine + H(+). It catalyses the reaction a 2-methoxy-6-(all-trans-polyprenyl)benzene-1,4-diol + S-adenosyl-L-methionine = a 5-methoxy-2-methyl-3-(all-trans-polyprenyl)benzene-1,4-diol + S-adenosyl-L-homocysteine + H(+). It participates in quinol/quinone metabolism; menaquinone biosynthesis; menaquinol from 1,4-dihydroxy-2-naphthoate: step 2/2. The protein operates within cofactor biosynthesis; ubiquinone biosynthesis. Functionally, methyltransferase required for the conversion of demethylmenaquinol (DMKH2) to menaquinol (MKH2) and the conversion of 2-polyprenyl-6-methoxy-1,4-benzoquinol (DDMQH2) to 2-polyprenyl-3-methyl-6-methoxy-1,4-benzoquinol (DMQH2). The polypeptide is Ubiquinone/menaquinone biosynthesis C-methyltransferase UbiE (Rickettsia africae (strain ESF-5)).